A 251-amino-acid chain; its full sequence is Ubiquinone/menaquinone biosynthesis C-methyltransferase UbiE (251 aa).

S-adenosyl-L-methionine contacts are provided by residues threonine 74, aspartate 95, and 123–124 (NA).

Belongs to the class I-like SAM-binding methyltransferase superfamily. MenG/UbiE family.

The enzyme catalyses a 2-demethylmenaquinol + S-adenosyl-L-methionine = a menaquinol + S-adenosyl-L-homocysteine + H(+). The catalysed reaction is a 2-methoxy-6-(all-trans-polyprenyl)benzene-1,4-diol + S-adenosyl-L-methionine = a 5-methoxy-2-methyl-3-(all-trans-polyprenyl)benzene-1,4-diol + S-adenosyl-L-homocysteine + H(+). Its pathway is quinol/quinone metabolism; menaquinone biosynthesis; menaquinol from 1,4-dihydroxy-2-naphthoate: step 2/2. It functions in the pathway cofactor biosynthesis; ubiquinone biosynthesis. Its function is as follows. Methyltransferase required for the conversion of demethylmenaquinol (DMKH2) to menaquinol (MKH2) and the conversion of 2-polyprenyl-6-methoxy-1,4-benzoquinol (DDMQH2) to 2-polyprenyl-3-methyl-6-methoxy-1,4-benzoquinol (DMQH2). The sequence is that of Ubiquinone/menaquinone biosynthesis C-methyltransferase UbiE from Edwardsiella ictaluri (strain 93-146).